Here is a 493-residue protein sequence, read N- to C-terminus: Accumulates dyads protein 4 (493 aa).

As to quaternary structure, interacts with CNM67, SPO21/MPC70 and NUD1.

It localises to the cytoplasm. It is found in the cytoskeleton. The protein resides in the microtubule organizing center. Its subcellular location is the spindle pole body. Functionally, involved in the pathway that organizes the shaping and sizing of the prospore membrane (PSM) during sporulation. May be required to stabilize the outer plaque of the spindle pole body (SPB). In Saccharomyces cerevisiae (strain ATCC 204508 / S288c) (Baker's yeast), this protein is Accumulates dyads protein 4 (ADY4).